Here is a 163-residue protein sequence, read N- to C-terminus: Protein MATERNALLY EXPRESSED GENE 5 (163 aa).

Positions 38–117 (STLYIEGLPA…DDVNVSAPAE (80 aa)) constitute an RRM domain. 2 disulfide bridges follow: cysteine 140–cysteine 162 and cysteine 143–cysteine 151.

This sequence belongs to the MEG family. Ubiquitous.

This chain is Protein MATERNALLY EXPRESSED GENE 5 (MEG5), found in Zea mays (Maize).